A 286-amino-acid polypeptide reads, in one-letter code: Acetyl-coenzyme A carboxylase carboxyl transferase subunit beta (286 aa).

Residues leucine 26–valine 286 enclose the CoA carboxyltransferase N-terminal domain. Zn(2+) contacts are provided by cysteine 30, cysteine 33, cysteine 49, and cysteine 52. Residues cysteine 30–cysteine 52 form a C4-type zinc finger.

The protein belongs to the AccD/PCCB family. As to quaternary structure, acetyl-CoA carboxylase is a heterohexamer composed of biotin carboxyl carrier protein (AccB), biotin carboxylase (AccC) and two subunits each of ACCase subunit alpha (AccA) and ACCase subunit beta (AccD). Requires Zn(2+) as cofactor.

Its subcellular location is the cytoplasm. It carries out the reaction N(6)-carboxybiotinyl-L-lysyl-[protein] + acetyl-CoA = N(6)-biotinyl-L-lysyl-[protein] + malonyl-CoA. Its pathway is lipid metabolism; malonyl-CoA biosynthesis; malonyl-CoA from acetyl-CoA: step 1/1. Component of the acetyl coenzyme A carboxylase (ACC) complex. Biotin carboxylase (BC) catalyzes the carboxylation of biotin on its carrier protein (BCCP) and then the CO(2) group is transferred by the transcarboxylase to acetyl-CoA to form malonyl-CoA. This Cellvibrio japonicus (strain Ueda107) (Pseudomonas fluorescens subsp. cellulosa) protein is Acetyl-coenzyme A carboxylase carboxyl transferase subunit beta.